We begin with the raw amino-acid sequence, 164 residues long: Glycine cleavage system H protein, mitochondrial (164 aa).

Residues 1–39 (MAWLVLRRLGPVLAPRCPRLSLRPQVPAVRRLGTGSLLL) constitute a mitochondrion transit peptide. The Lipoyl-binding domain maps to 57-139 (IGTVGISNFA…YQDGWLIKMT (83 aa)). N6-lipoyllysine is present on Lys-98.

Belongs to the GcvH family. The glycine cleavage system is composed of four proteins: P (GLDC), T (GCST), L (DLD) and H (GCSH). Interacts with GLDC. Requires (R)-lipoate as cofactor.

Its subcellular location is the mitochondrion. In terms of biological role, the glycine cleavage system catalyzes the degradation of glycine. The H protein (GCSH) shuttles the methylamine group of glycine from the P protein (GLDC) to the T protein (GCST). Has a pivotal role in the lipoylation of enzymes involved in cellular energetics such as the mitochondrial dihydrolipoyllysine-residue acetyltransferase component of pyruvate dehydrogenase complex (DLAT), and the mitochondrial dihydrolipoyllysine-residue succinyltransferase component of 2-oxoglutarate dehydrogenase complex (DLST). The protein is Glycine cleavage system H protein, mitochondrial of Gallus gallus (Chicken).